Consider the following 489-residue polypeptide: MTAELLVNVTPSETRVAYIDGGILQEIHIEREARRGIVGNIYKGRVSRVLPGMQAAFVDIGLDKAAFLHASDIMPHTECVAGDEQKQFTVRDISELVRQGQDLMVQVVKDPLGTKGARLTTDITLPSRYLVFMPGASHVGVSQRIESESERERLKKVVAEYCDEQGGFIIRTAAEGVCEEDLASDAAYLKRVWTKVMERKKRPQTRYQMYGELALAQRVLRDFADAQLDRIRVDSRLTYESLLEFTAEYIPEMTSKLEHYSGHQPIFDLYDVENEIQRALERKVELKSGGYLIIDQTEAMTTVDINTGAFVGHRNLDDTIFNTNIEATQAIARQLRLRNLGGIIIIDFIDMNNEDHRRRVLHSLEQALSKDRVKTSINGFSPLGLVEMTRKRTRESVEHVLCNECPTCHGRGTVKTVETVCYEIMREIVRVHHAYDSDRFLVYASPAVAEALKGEESHALAEVEIFVGKQVKVQVEPLYNQEQFDVVMM.

The region spanning 39-128 (GNIYKGRVSR…LTTDITLPSR (90 aa)) is the S1 motif domain. Mg(2+) contacts are provided by Asp304 and Asp347.

The protein belongs to the RNase E/G family. RNase G subfamily. Homodimer, and possible higher multimers. Mg(2+) serves as cofactor.

The protein resides in the cytoplasm. In terms of biological role, acts in the processing of the 5'-end of precursors of 16S rRNA. Confers adaptive resistance to aminoglycoside antibiotics through modulation of 16S rRNA processing. An endoribonuclease, it prefers 5'-monophosphorylated substrates and cleaves single-stranded sites rich in A and U residues; also contributes to 23S rRNA processing, tRNA processing and mRNA turnover. Involved in decay of speF mRNA, has a preference for adenine nucleotides. In Salmonella typhimurium (strain SL1344), this protein is Ribonuclease G.